Consider the following 124-residue polypeptide: Ribonuclease pancreatic (124 aa).

The segment at 1–23 is disordered; sequence RESPAMKFQRQHMDSGNSPGNNP. Residues Lys7 and Arg10 each coordinate substrate. His12 functions as the Proton acceptor in the catalytic mechanism. Residues 14-23 show a composition bias toward polar residues; that stretch reads DSGNSPGNNP. 4 disulfides stabilise this stretch: Cys26–Cys84, Cys40–Cys95, Cys58–Cys110, and Cys65–Cys72. Substrate-binding positions include 41 to 45 and Lys66; that span reads KPVNT. N-linked (GlcNAc...) asparagine; partial glycosylation is present at Asn76. Arg85 contributes to the substrate binding site. The active-site Proton donor is the His119.

Belongs to the pancreatic ribonuclease family. In terms of assembly, monomer. Interacts with and forms tight 1:1 complexes with RNH1. Dimerization of two such complexes may occur. Interaction with RNH1 inhibits this protein. In terms of tissue distribution, pancreas.

The protein localises to the secreted. It catalyses the reaction an [RNA] containing cytidine + H2O = an [RNA]-3'-cytidine-3'-phosphate + a 5'-hydroxy-ribonucleotide-3'-[RNA].. It carries out the reaction an [RNA] containing uridine + H2O = an [RNA]-3'-uridine-3'-phosphate + a 5'-hydroxy-ribonucleotide-3'-[RNA].. Functionally, endonuclease that catalyzes the cleavage of RNA on the 3' side of pyrimidine nucleotides. Acts on single-stranded and double-stranded RNA. The polypeptide is Ribonuclease pancreatic (RNASE1) (Balaenoptera acutorostrata (Common minke whale)).